The following is a 564-amino-acid chain: Glutamyl-tRNA(Gln) amidotransferase subunit B, mitochondrial (564 aa).

Residues 1–88 constitute a mitochondrion transit peptide; that stretch reads MIRQCVSHRG…DTDAKLFSRA (88 aa). The tract at residues 26–63 is disordered; it reads PFHHPSPRPLGRKNWSTSDEAKSKRAAMRKGGAPPPEH.

The protein belongs to the GatB/GatE family. GatB subfamily. Subunit of the heterotrimeric GatCAB amidotransferase (AdT) complex, composed of A, B and C subunits.

The protein resides in the mitochondrion. It catalyses the reaction L-glutamyl-tRNA(Gln) + L-glutamine + ATP + H2O = L-glutaminyl-tRNA(Gln) + L-glutamate + ADP + phosphate + H(+). In terms of biological role, allows the formation of correctly charged Gln-tRNA(Gln) through the transamidation of misacylated Glu-tRNA(Gln) in the mitochondria. The reaction takes place in the presence of glutamine and ATP through an activated gamma-phospho-Glu-tRNA(Gln). This is Glutamyl-tRNA(Gln) amidotransferase subunit B, mitochondrial from Ajellomyces capsulatus (strain G186AR / H82 / ATCC MYA-2454 / RMSCC 2432) (Darling's disease fungus).